A 420-amino-acid chain; its full sequence is Glutamyl-tRNA reductase (420 aa).

Substrate contacts are provided by residues 49 to 52 (TCNR), S109, 114 to 116 (EPQ), and Q120. Residue C50 is the Nucleophile of the active site. Position 189-194 (189-194 (GAGETI)) interacts with NADP(+).

The protein belongs to the glutamyl-tRNA reductase family. As to quaternary structure, homodimer.

The catalysed reaction is (S)-4-amino-5-oxopentanoate + tRNA(Glu) + NADP(+) = L-glutamyl-tRNA(Glu) + NADPH + H(+). Its pathway is porphyrin-containing compound metabolism; protoporphyrin-IX biosynthesis; 5-aminolevulinate from L-glutamyl-tRNA(Glu): step 1/2. In terms of biological role, catalyzes the NADPH-dependent reduction of glutamyl-tRNA(Glu) to glutamate 1-semialdehyde (GSA). This is Glutamyl-tRNA reductase from Edwardsiella ictaluri (strain 93-146).